Reading from the N-terminus, the 293-residue chain is MAAITASMVAELRAKTDAPMMECKKALTEADGDMAKAEELLRVKLGNKASKAASRVTAEGVVASFVGANAGALVELNCETDFVAKNDDFNAFAKTVAELVATQNPADVAALSALPLDGKTVDEVRLALVGKIGENISIRRFVRFETSNKLATYLHGSRIGVIVEYTGEQEQVGKDVAMHVAAMKPVSLSSDDVPAELIEKERRVAEQKAAESGKPAEIVAKMVDGSVQKFLKEVSLLNQPFVKNDKQTIEQMLKASNAAVQKFALFVVGEGIEKRQDDFAAEVAAQVAAAKQQ.

The tract at residues 80–83 is involved in Mg(2+) ion dislocation from EF-Tu; sequence TDFV.

This sequence belongs to the EF-Ts family.

The protein localises to the cytoplasm. Associates with the EF-Tu.GDP complex and induces the exchange of GDP to GTP. It remains bound to the aminoacyl-tRNA.EF-Tu.GTP complex up to the GTP hydrolysis stage on the ribosome. This is Elongation factor Ts from Burkholderia thailandensis (strain ATCC 700388 / DSM 13276 / CCUG 48851 / CIP 106301 / E264).